A 324-amino-acid polypeptide reads, in one-letter code: MNVLITGGAGFLGLQLARLLLQRGTLNLDGQPVAIKRLTLLDVVAPQGLDDARVRVVTGDLSDPAVLRQAIDTDTGAVFHLAAVVSGQAEADFDLGMRVNLDASRALLETCRELGHQPRVLFTSSVAVYGGQLPPVVQDDTALNPQSSYGVQKAIGELLLSDYSRRGFVDGRVLRLPTISVRPGKPNAAASSFASGIIREPLSGVAANCPVAPETPLWLLSPRAAVAALVNGIELAGERLGNRRVVNLPGLSVTAAGMIEALRRVAGNAVADRVTWEREARVENIVGTWPAAWNAERALALGFQSDASFDEVIRAYMEDAGLAK.

Residues Ser-125, Tyr-149, and Lys-153 each contribute to the NAD(+) site. The Proton acceptor role is filled by Tyr-149.

This sequence belongs to the NAD(P)-dependent epimerase/dehydratase family.

It catalyses the reaction D-erythronate + NAD(+) = 2-dehydro-D-erythronate + NADH + H(+). Functionally, catalyzes oxidation of D-erythronate to 2-oxo-tetronate. Can use either NAD(+) or NADP(+) as cosubstrate, with a preference for NAD(+). This is D-erythronate dehydrogenase from Cupriavidus necator (strain ATCC 17699 / DSM 428 / KCTC 22496 / NCIMB 10442 / H16 / Stanier 337) (Ralstonia eutropha).